A 215-amino-acid chain; its full sequence is Fanconi anemia core complex-associated protein 24 (215 aa).

Belongs to the multisubunit FA complex composed of FANCA, FANCB, FANCC, FANCE, FANCF, FANCG, FANCL/PHF9, FANCM and FAAP24. Interacts with FANCM.

Its subcellular location is the nucleus. Plays a role in DNA repair through recruitment of the FA core complex to damaged DNA. Regulates FANCD2 monoubiquitination upon DNA damage. Induces chromosomal instability as well as hypersensitivity to DNA cross-linking agents, when repressed. Targets FANCM/FAAP24 complex to the DNA, preferentially to single strand DNA. This chain is Fanconi anemia core complex-associated protein 24, found in Bos taurus (Bovine).